The chain runs to 97 residues: UPF0235 protein HAPS_1504 (97 aa).

The protein belongs to the UPF0235 family.

The chain is UPF0235 protein HAPS_1504 from Glaesserella parasuis serovar 5 (strain SH0165) (Haemophilus parasuis).